We begin with the raw amino-acid sequence, 475 residues long: Endoglucanase A (475 aa).

The first 26 residues, 1–26 (MKKTTAFLLCFLMIFTALLPMQNANA), serve as a signal peptide directing secretion. H147 is a catalytic residue. Catalysis depends on E195, which acts as the Proton donor. Catalysis depends on E332, which acts as the Nucleophile. One can recognise a Dockerin domain in the interval 409–474 (PVIVYGDYNN…LLGMVSKLPS (66 aa)).

This sequence belongs to the glycosyl hydrolase 5 (cellulase A) family.

It carries out the reaction Endohydrolysis of (1-&gt;4)-beta-D-glucosidic linkages in cellulose, lichenin and cereal beta-D-glucans.. In terms of biological role, the biological conversion of cellulose to glucose generally requires three types of hydrolytic enzymes: (1) Endoglucanases which cut internal beta-1,4-glucosidic bonds; (2) Exocellobiohydrolases that cut the disaccharide cellobiose from the non-reducing end of the cellulose polymer chain; (3) Beta-1,4-glucosidases which hydrolyze the cellobiose and other short cello-oligosaccharides to glucose. The protein is Endoglucanase A (celCCA) of Ruminiclostridium cellulolyticum (strain ATCC 35319 / DSM 5812 / JCM 6584 / H10) (Clostridium cellulolyticum).